Consider the following 203-residue polypeptide: dITP/XTP pyrophosphatase (203 aa).

8–13 (TANKGK) is a binding site for substrate. 2 residues coordinate Mg(2+): Glu41 and Asp70. Asp70 serves as the catalytic Proton acceptor. Residues Ser71, 153 to 156 (FGYD), Lys176, and 181 to 182 (HR) each bind substrate.

This sequence belongs to the HAM1 NTPase family. Homodimer. Mg(2+) serves as cofactor.

It carries out the reaction XTP + H2O = XMP + diphosphate + H(+). The enzyme catalyses dITP + H2O = dIMP + diphosphate + H(+). The catalysed reaction is ITP + H2O = IMP + diphosphate + H(+). In terms of biological role, pyrophosphatase that catalyzes the hydrolysis of nucleoside triphosphates to their monophosphate derivatives, with a high preference for the non-canonical purine nucleotides XTP (xanthosine triphosphate), dITP (deoxyinosine triphosphate) and ITP. Seems to function as a house-cleaning enzyme that removes non-canonical purine nucleotides from the nucleotide pool, thus preventing their incorporation into DNA/RNA and avoiding chromosomal lesions. In Listeria monocytogenes serotype 4b (strain F2365), this protein is dITP/XTP pyrophosphatase.